The sequence spans 274 residues: Large ribosomal subunit protein uL2 (274 aa).

The tract at residues 1–23 is disordered; that stretch reads MAIKIYRPTSPGRRHHSVSSFEE.

It belongs to the universal ribosomal protein uL2 family. As to quaternary structure, part of the 50S ribosomal subunit. Forms a bridge to the 30S subunit in the 70S ribosome.

Functionally, one of the primary rRNA binding proteins. Required for association of the 30S and 50S subunits to form the 70S ribosome, for tRNA binding and peptide bond formation. It has been suggested to have peptidyltransferase activity; this is somewhat controversial. Makes several contacts with the 16S rRNA in the 70S ribosome. This is Large ribosomal subunit protein uL2 from Dehalococcoides mccartyi (strain ATCC BAA-2100 / JCM 16839 / KCTC 5957 / BAV1).